Consider the following 218-residue polypeptide: Small ribosomal subunit protein uS3c (218 aa).

Residues 47–118 (VQKQIKNSSN…KIQITLKNVL (72 aa)) enclose the KH type-2 domain.

It belongs to the universal ribosomal protein uS3 family. In terms of assembly, part of the 30S ribosomal subunit.

The protein resides in the plastid. It localises to the chloroplast. This chain is Small ribosomal subunit protein uS3c (rps3), found in Angiopteris evecta (Mule's foot fern).